A 180-amino-acid chain; its full sequence is Translation initiation factor IF-3 (180 aa).

It belongs to the IF-3 family. As to quaternary structure, monomer.

Its subcellular location is the cytoplasm. In terms of biological role, IF-3 binds to the 30S ribosomal subunit and shifts the equilibrium between 70S ribosomes and their 50S and 30S subunits in favor of the free subunits, thus enhancing the availability of 30S subunits on which protein synthesis initiation begins. The protein is Translation initiation factor IF-3 of Salmonella paratyphi A (strain ATCC 9150 / SARB42).